A 272-amino-acid polypeptide reads, in one-letter code: Acidic leucine-rich nuclear phosphoprotein 32 family member B (272 aa).

LRR repeat units follow at residues 16-40 (PAAV…LTDE), 43-64 (NLEF…PKLP), 65-84 (KLKK…DRLA), and 89-110 (SLTH…EPLK). Positions 123 to 161 (CEVTNRSDYRETVFRLLPQLSYLDGYDREDQEAPDSDVE) constitute an LRRCT domain. The span at 149–254 (DREDQEAPDS…DEDEDEEEEE (106 aa)) shows a compositional bias: acidic residues. Residues 149-272 (DREDQEAPDS…RETDDEGEDD (124 aa)) are disordered. Residues Ser-164 and Ser-171 each carry the phosphoserine modification. Basic and acidic residues predominate over residues 255–265 (SGKGEKRKRET). Positions 260-263 (KRKR) match the Nuclear localization signal motif. A Phosphothreonine modification is found at Thr-265.

It belongs to the ANP32 family. As to quaternary structure, interacts with histones H3 and H4. Interacts with KLF5; this interaction induces promoter region-specific histone incorporation and inhibition of histone acetylation by ANP32B. Post-translationally, some glutamate residues are glycylated by TTLL8. This modification occurs exclusively on glutamate residues and results in a glycine chain on the gamma-carboxyl group. Directly cleaved by caspase-3/CASP3. Predominantly expressed in brain. Expressed in the entire embryonic brain, whereas in the adult brain its expression is restricted to the subventricular zone where there are neural progenitor cells.

It is found in the nucleus. Functionally, multifunctional protein that is involved in the regulation of many processes including cell proliferation, apoptosis, cell cycle progression or transcription. Regulates the proliferation of neuronal stem cells, differentiation of leukemic cells and progression from G1 to S phase of the cell cycle. As negative regulator of caspase-3-dependent apoptosis, may act as an antagonist of ANP32A in regulating tissue homeostasis. Exhibits histone chaperone properties, able to recruit histones to certain promoters, thus regulating the transcription of specific genes. Also plays an essential role in the nucleocytoplasmic transport of specific mRNAs via the uncommon nuclear mRNA export receptor XPO1/CRM1. Participates in the regulation of adequate adaptive immune responses by acting on mRNA expression and cell proliferation. This chain is Acidic leucine-rich nuclear phosphoprotein 32 family member B (Anp32b), found in Rattus norvegicus (Rat).